The chain runs to 205 residues: Potassium-transporting ATPase KdpC subunit (205 aa).

Residues 9–29 traverse the membrane as a helical segment; sequence VFAVLFLFILGFVYPTVTSLI.

Belongs to the KdpC family. The system is composed of three essential subunits: KdpA, KdpB and KdpC.

It is found in the cell membrane. In terms of biological role, part of the high-affinity ATP-driven potassium transport (or Kdp) system, which catalyzes the hydrolysis of ATP coupled with the electrogenic transport of potassium into the cytoplasm. This subunit acts as a catalytic chaperone that increases the ATP-binding affinity of the ATP-hydrolyzing subunit KdpB by the formation of a transient KdpB/KdpC/ATP ternary complex. This chain is Potassium-transporting ATPase KdpC subunit, found in Thermoplasma acidophilum (strain ATCC 25905 / DSM 1728 / JCM 9062 / NBRC 15155 / AMRC-C165).